A 474-amino-acid chain; its full sequence is 3-isopropylmalate dehydratase large subunit (474 aa).

[4Fe-4S] cluster-binding residues include cysteine 353, cysteine 414, and cysteine 417.

It belongs to the aconitase/IPM isomerase family. LeuC type 1 subfamily. Heterodimer of LeuC and LeuD. [4Fe-4S] cluster serves as cofactor.

It carries out the reaction (2R,3S)-3-isopropylmalate = (2S)-2-isopropylmalate. It participates in amino-acid biosynthesis; L-leucine biosynthesis; L-leucine from 3-methyl-2-oxobutanoate: step 2/4. In terms of biological role, catalyzes the isomerization between 2-isopropylmalate and 3-isopropylmalate, via the formation of 2-isopropylmaleate. The sequence is that of 3-isopropylmalate dehydratase large subunit from Xylella fastidiosa (strain M12).